A 278-amino-acid polypeptide reads, in one-letter code: Non-heme chloroperoxidase (278 aa).

The 239-residue stretch at 26–264 (PVVLIHGFPL…GAPHGLLWTH (239 aa)) folds into the AB hydrolase-1 domain. Catalysis depends on residues serine 99, aspartate 229, and histidine 258.

The protein belongs to the AB hydrolase superfamily. Bacterial non-heme haloperoxidase / perhydrolase family. Homodimer.

This chain is Non-heme chloroperoxidase (cpo), found in Kitasatospora aureofaciens (Streptomyces aureofaciens).